The chain runs to 258 residues: UPF0246 protein Sden_2729 (258 aa).

Belongs to the UPF0246 family.

This Shewanella denitrificans (strain OS217 / ATCC BAA-1090 / DSM 15013) protein is UPF0246 protein Sden_2729.